Reading from the N-terminus, the 371-residue chain is tRNA/tmRNA (uracil-C(5))-methyltransferase (371 aa).

Residues Q194, Y223, N228, E244, and D304 each coordinate S-adenosyl-L-methionine. C329 (nucleophile) is an active-site residue. E363 acts as the Proton acceptor in catalysis.

This sequence belongs to the class I-like SAM-binding methyltransferase superfamily. RNA M5U methyltransferase family. TrmA subfamily.

The enzyme catalyses uridine(54) in tRNA + S-adenosyl-L-methionine = 5-methyluridine(54) in tRNA + S-adenosyl-L-homocysteine + H(+). It catalyses the reaction uridine(341) in tmRNA + S-adenosyl-L-methionine = 5-methyluridine(341) in tmRNA + S-adenosyl-L-homocysteine + H(+). Functionally, dual-specificity methyltransferase that catalyzes the formation of 5-methyluridine at position 54 (m5U54) in all tRNAs, and that of position 341 (m5U341) in tmRNA (transfer-mRNA). This Sulfurovum sp. (strain NBC37-1) protein is tRNA/tmRNA (uracil-C(5))-methyltransferase.